Consider the following 98-residue polypeptide: Large ribosomal subunit protein bL28 (98 aa).

This sequence belongs to the bacterial ribosomal protein bL28 family.

This Phenylobacterium zucineum (strain HLK1) protein is Large ribosomal subunit protein bL28.